The chain runs to 93 residues: Sec-independent protein translocase protein TatA (93 aa).

A helical transmembrane segment spans residues 1–21 (MGSLSPWHWAILAVVVILLFG). Residues 45-93 (EMQSENKTETSALGAQSESSAANPTPVQSQRVDPPAPSEQGHSEARPAS) are disordered. Over residues 53–75 (ETSALGAQSESSAANPTPVQSQR) the composition is skewed to polar residues.

This sequence belongs to the TatA/E family. In terms of assembly, the Tat system comprises two distinct complexes: a TatABC complex, containing multiple copies of TatA, TatB and TatC subunits, and a separate TatA complex, containing only TatA subunits. Substrates initially bind to the TatABC complex, which probably triggers association of the separate TatA complex to form the active translocon.

It localises to the cell membrane. Functionally, part of the twin-arginine translocation (Tat) system that transports large folded proteins containing a characteristic twin-arginine motif in their signal peptide across membranes. TatA could form the protein-conducting channel of the Tat system. The polypeptide is Sec-independent protein translocase protein TatA (Mycolicibacterium paratuberculosis (strain ATCC BAA-968 / K-10) (Mycobacterium paratuberculosis)).